Reading from the N-terminus, the 188-residue chain is Ribosome-recycling factor (188 aa).

This sequence belongs to the RRF family.

The protein resides in the cytoplasm. Its function is as follows. Responsible for the release of ribosomes from messenger RNA at the termination of protein biosynthesis. May increase the efficiency of translation by recycling ribosomes from one round of translation to another. The chain is Ribosome-recycling factor from Caulobacter vibrioides (strain NA1000 / CB15N) (Caulobacter crescentus).